A 418-amino-acid polypeptide reads, in one-letter code: Acyl-[acyl-carrier-protein] desaturase 4, chloroplastic (418 aa).

Residues 1 to 70 (MASSGLAVAA…ATAAAPADTA (70 aa)) constitute a chloroplast transit peptide. Positions 152, 190, 193, 243, 276, and 279 each coordinate Fe cation.

Belongs to the fatty acid desaturase type 2 family. As to quaternary structure, homodimer. It depends on Fe(2+) as a cofactor.

It is found in the plastid. The protein localises to the chloroplast. The protein operates within lipid metabolism; fatty acid metabolism. Its function is as follows. Introduces a cis double bond in the acyl chain of an acyl-[acyl-carrier protein]. This is Acyl-[acyl-carrier-protein] desaturase 4, chloroplastic from Oryza sativa subsp. japonica (Rice).